The sequence spans 247 residues: MSHRDTLFSAPIARLGDWTFDERVAEVFPDMIQRSVPGYSNIISMIGMLAERFVQPGTQVYDLGCSLGAATLSVRRNIHHDNCKIIAIDNSPAMIERCRRHIDAYKAPTPVDVIEGDIRDIAIENASMVVLNFTLQFLEPSERQALLDKIYQGLNPGGALVLSEKFSFEDAKVGELLFNMHHDFKRANGYSELEISQKRSMLENVMLTDSVETHKARLHNAGFEHSELWFQCFNFGSLVALKAEDAA.

Residues Tyr39, 64–66, 89–90, 117–118, Asn132, and Arg199 each bind S-adenosyl-L-methionine; these read GCS, DN, and DI.

This sequence belongs to the class I-like SAM-binding methyltransferase superfamily. Cx-SAM synthase family. As to quaternary structure, homodimer.

It catalyses the reaction prephenate + S-adenosyl-L-methionine = carboxy-S-adenosyl-L-methionine + 3-phenylpyruvate + H2O. In terms of biological role, catalyzes the conversion of S-adenosyl-L-methionine (SAM) to carboxy-S-adenosyl-L-methionine (Cx-SAM). The polypeptide is Carboxy-S-adenosyl-L-methionine synthase (Escherichia coli (strain K12 / MC4100 / BW2952)).